Consider the following 581-residue polypeptide: Pyridine nucleotide-disulfide oxidoreductase domain-containing protein 2 (581 aa).

Valine 38–glycine 71 serves as a coordination point for FAD.

This sequence belongs to the carotenoid/retinoid oxidoreductase family. In terms of assembly, interacts with COX5B; this interaction may contribute to localize PYROXD2 to the inner face of the inner mitochondrial membrane.

Its subcellular location is the mitochondrion matrix. Probable oxidoreductase that may play a role as regulator of mitochondrial function. This chain is Pyridine nucleotide-disulfide oxidoreductase domain-containing protein 2, found in Rattus norvegicus (Rat).